A 223-amino-acid polypeptide reads, in one-letter code: 7-cyano-7-deazaguanine synthase (223 aa).

10–20 is a binding site for ATP; that stretch reads FSGGQDSTTCL. Zn(2+) is bound by residues cysteine 188, cysteine 197, cysteine 200, and cysteine 203.

It belongs to the QueC family. Requires Zn(2+) as cofactor.

The enzyme catalyses 7-carboxy-7-deazaguanine + NH4(+) + ATP = 7-cyano-7-deazaguanine + ADP + phosphate + H2O + H(+). Its pathway is purine metabolism; 7-cyano-7-deazaguanine biosynthesis. Its function is as follows. Catalyzes the ATP-dependent conversion of 7-carboxy-7-deazaguanine (CDG) to 7-cyano-7-deazaguanine (preQ(0)). This Phocaeicola vulgatus (strain ATCC 8482 / DSM 1447 / JCM 5826 / CCUG 4940 / NBRC 14291 / NCTC 11154) (Bacteroides vulgatus) protein is 7-cyano-7-deazaguanine synthase.